We begin with the raw amino-acid sequence, 3263 residues long: Protein unc-80 (3263 aa).

Disordered regions lie at residues 491-527, 627-666, 939-1010, 1042-1076, 1380-1475, 1633-1660, and 1680-1721; these read KSAL…LDEG, NDTE…SNPS, PTTS…DDGV, DEEI…QVKA, SRQS…RMRA, LRKQ…RESA, and MQQE…LPEK. Residues 499 to 508 are compositionally biased toward basic and acidic residues; it reads NENRRTDHQR. The span at 509-519 shows a compositional bias: polar residues; that stretch reads MPSTQKSVSGS. Over residues 644-658 the composition is skewed to low complexity; the sequence is TTNSRRSSLNTLSRR. Polar residues-rich tracts occupy residues 956-967 and 981-1005; these read GAQSQKQSNDQA and SGGT…TVSS. Positions 1042–1055 are enriched in acidic residues; it reads DEEISDNENEEGTS. Positions 1393–1402 are enriched in polar residues; it reads QGSTKSTTYV. The span at 1435 to 1447 shows a compositional bias: basic residues; it reads HKRKSFRNRKQSK. 2 stretches are compositionally biased toward polar residues: residues 1460–1469 and 1633–1653; these read GSLTSQQSPI and LRKQ…QSTA. Over residues 1680 to 1710 the composition is skewed to basic and acidic residues; it reads MQQEKEKEKEKEKEEKDALKKQSVEQDHSST. A run of 5 helical transmembrane segments spans residues 2088-2108, 2318-2338, 2352-2372, 2953-2973, and 2995-3015; these read AIGM…GLYF, AFMF…MIMH, YISI…FLIM, AIYL…APMW, and AFVD…LPMI. Disordered stretches follow at residues 3078–3166 and 3178–3198; these read YTPT…RTRS and RKSR…SVEL. Residues 3124-3135 are compositionally biased toward acidic residues; that stretch reads IPEDPEDSEDVI. Residues 3138-3166 are compositionally biased toward polar residues; it reads NSTGQVTSRISKSPSIPLNKTHQSSRTRS.

The protein belongs to the unc-80 family. As to expression, expressed in the nervous system. Expressed in both acetylcholine and GABA motor neurons.

It localises to the membrane. Its function is as follows. Probable component of the nca-1 sodium channel complex, a cation channel that regulates neuronal activity by transmitting depolarization signals to synapses. Regulates the transition from slow to rapid forms of locomotion. Required for localization of nca-1 along axons and in non-synaptic regions. Contributes to endocytosis defects in synaptojanin mutants. Involved in the control of anasthetic response to halothane. This chain is Protein unc-80 (unc-80), found in Caenorhabditis elegans.